Reading from the N-terminus, the 181-residue chain is UPF0228 protein MA_3117 (181 aa).

The protein belongs to the UPF0228 family.

This is UPF0228 protein MA_3117 from Methanosarcina acetivorans (strain ATCC 35395 / DSM 2834 / JCM 12185 / C2A).